The sequence spans 48 residues: MDRISAQKDIFKKVVNKENSSIFVSLGVFAVSVAILKSRLGNFLVPQL.

A helical transmembrane segment spans residues 21–43; it reads SIFVSLGVFAVSVAILKSRLGNF.

The protein localises to the membrane. This is an uncharacterized protein from Schizosaccharomyces pombe (strain 972 / ATCC 24843) (Fission yeast).